The chain runs to 200 residues: Cuticle protein 19.8 (200 aa).

3 consecutive repeat copies span residues 20-23 (AAPA), 26-29 (AAPA), and 43-46 (AAPA). The Chitin-binding type R&amp;R domain maps to 56 to 127 (HPQYSYGYSV…EPGVHAPIAA (72 aa)). Residues 70 to 89 (TGDSKSQQESRDGDVVQGSY) are disordered. A run of 5 repeats spans residues 126–129 (AAPV), 144–147 (AAPA), 150–153 (AAPV), 159–162 (AAPA), and 177–180 (AAPA).

Functionally, component of the cuticle of migratory locust which contains more than 100 different structural proteins. This is Cuticle protein 19.8 from Locusta migratoria (Migratory locust).